A 950-amino-acid polypeptide reads, in one-letter code: Leucine--tRNA ligase (950 aa).

The 'HIGH' region signature appears at 42 to 52; sequence PYLNGNLHAGH. Positions 629–633 match the 'KMSKS' region motif; sequence KMSKS. Residue Lys632 participates in ATP binding. Positions 928 to 950 are disordered; sequence NPPYDPKGRAQNAEPGRPAIYIE.

Belongs to the class-I aminoacyl-tRNA synthetase family.

The protein localises to the cytoplasm. It catalyses the reaction tRNA(Leu) + L-leucine + ATP = L-leucyl-tRNA(Leu) + AMP + diphosphate. This Methanothrix thermoacetophila (strain DSM 6194 / JCM 14653 / NBRC 101360 / PT) (Methanosaeta thermophila) protein is Leucine--tRNA ligase.